The chain runs to 529 residues: DnaJ homolog l(2)tid, mitochondrial (529 aa).

The transit peptide at 1-22 (MISCKNLCVLRQLPLKNCRRHY) directs the protein to the mitochondrion. Arg35 carries the omega-N-methylarginine modification. The J domain occupies 80-145 (DYYATLGVAK…QKRREYDTYG (66 aa)). Lys121 carries the N6-acetyllysine modification. The CR-type zinc finger occupies 230–308 (GVNKDVNVNV…CEGKGQTVQR (79 aa)). Zn(2+) is bound by residues Cys243, Cys246, Cys260, Cys263, Cys282, Cys285, Cys296, and Cys299. The CXXCXGXG motif; approximate repeat unit spans residues 243 to 250 (CPKCAGSK). Residues 260-267 (CQYCNGTG) form a CXXCXGXG motif repeat. A CXXCXGXG motif; approximate repeat occupies 282 to 289 (CRYCQGTR). One copy of the CXXCXGXG motif repeat lies at 296–303 (CAECEGKG). The disordered stretch occupies residues 441 to 529 (TPGQIHGMAQ…FLNKIKSMFN (89 aa)). The span at 497 to 508 (QSEKSETRRKDQ) shows a compositional bias: basic and acidic residues.

Its subcellular location is the mitochondrion outer membrane. Its function is as follows. May act as a tumor suppressor in larval imaginal disks. This chain is DnaJ homolog l(2)tid, mitochondrial (l(2)tid), found in Drosophila virilis (Fruit fly).